A 555-amino-acid chain; its full sequence is MSEAEARPSNFIRQIIDEDLASGKHTTVHTRFPPEPNGYLHIGHAKSICLNFGIAQDYQGQCNLRFDDTNPVKEDIEYVESIKNDVQWLGFNWSGDICYSSDYFDQLFAYAVELINKGLAYVDELSADEIREYRGSLTAPGKNSPYRDRSVEENLALFEKMRAGGFEEGKACLRAKIDMASPFIVMRDPVLYRIKFAEHHQTGNKWCIYPMYDFTHCISDALEGITHSLCTLEFQDNRRLYDWVLDNITIPVHPRQYEFSRLNLEYTVMSKRKLNLLVTDKHVEGWDDPRMPTISGLRRRGYSASSIREFIKRIGVTKQDNTIEMASLESCIREDLNENAPRAMAVIDPVKLVIENYPQGESELVTMPNHPSKPEMGSREVPFSAEIWIDRADFREEANKQYKRLVMGKEVRLRNAYVIKAERVEKDTEGNITTIFCSYDAETLSKDPADGRKVKGVIHWVSAAHALPVEIRLYDRLFSVPNPGAAEDFLATINPESLLIKQGYAEPSLKNAETGKAYQFEREGYFCLDSRYATATKLVFNRTVGLRDTWAKAGE.

Residues 34-44 (PEPNGYLHIGH) carry the 'HIGH' region motif. Residues 35-37 (EPN) and 41-47 (HIGHAKS) contribute to the ATP site. Residues aspartate 67 and tyrosine 212 each contribute to the L-glutamine site. Residues threonine 231, 261–262 (RL), and 269–271 (MSK) contribute to the ATP site. The 'KMSKS' region signature appears at 268 to 272 (VMSKR). The interval 317 to 324 (TKQDNTIE) is interaction with tRNA.

Belongs to the class-I aminoacyl-tRNA synthetase family. In terms of assembly, monomer.

It localises to the cytoplasm. It carries out the reaction tRNA(Gln) + L-glutamine + ATP = L-glutaminyl-tRNA(Gln) + AMP + diphosphate. The protein is Glutamine--tRNA ligase of Enterobacter sp. (strain 638).